We begin with the raw amino-acid sequence, 1381 residues long: Hepatocyte growth factor receptor (1381 aa).

Residues 1–24 (MKAPAVLAPGILVLLFTLVQRSNG) form the signal peptide. At 25–934 (ECKEALTKSE…VQPDQNFTGL (910 aa)) the chain is on the extracellular side. Residues 27–515 (KEALTKSEMN…TGKKITKIPL (489 aa)) form the Sema domain. The N-linked (GlcNAc...) asparagine glycan is linked to Asn45. 4 disulfides stabilise this stretch: Cys95–Cys101, Cys98–Cys160, Cys133–Cys141, and Cys172–Cys175. Asn106 carries N-linked (GlcNAc...) asparagine glycosylation. The N-linked (GlcNAc...) asparagine glycan is linked to Asn149. N-linked (GlcNAc...) asparagine glycosylation is present at Asn202. Intrachain disulfides connect Cys298–Cys363 and Cys385–Cys397. Asn399 is a glycosylation site (N-linked (GlcNAc...) asparagine). Cystine bridges form between Cys520/Cys538, Cys526/Cys561, Cys529/Cys545, and Cys541/Cys551. IPT/TIG domains lie at 563–655 (PAIY…FSYV), 657–739 (PIIT…FSYL), and 742–836 (PIVY…LIYV). Residue Thr582 is glycosylated (O-linked (Man) threonine). 2 N-linked (GlcNAc...) asparagine glycosylation sites follow: Asn607 and Asn635. Residues Thr676 and Thr761 are each glycosylated (O-linked (Man) threonine). Asn785, Asn879, and Asn930 each carry an N-linked (GlcNAc...) asparagine glycan. The helical transmembrane segment at 935–955 (IAGVVSISIALLLLLAFFLWL) threads the bilayer. Residues 956–1381 (KKRKQIKDLG…QDNADGEVDT (426 aa)) are Cytoplasmic-facing. The residue at position 966 (Ser966) is a Phosphoserine. At Thr977 the chain carries Phosphothreonine. Phosphoserine is present on residues Ser990, Ser997, and Ser1000. A Phosphotyrosine modification is found at Tyr1003. Residues 1078–1345 (VHFNEVIGRG…RISAIFSTFI (268 aa)) enclose the Protein kinase domain. ATP is bound by residues 1084–1092 (IGRGHFGCV) and Lys1110. Residue Asp1204 is the Proton acceptor of the active site. Residues 1212-1381 (LDEKFTVKVA…QDNADGEVDT (170 aa)) are interaction with RANBP9. Phosphotyrosine is present on Tyr1230. Phosphotyrosine; by autocatalysis is present on residues Tyr1234 and Tyr1235. At Thr1289 the chain carries Phosphothreonine. The tract at residues 1320-1359 (WHPKAEMRPSFSELVSRISAIFSTFIGEHYVHVNATYVNV) is interaction with MUC20. Residues Tyr1349 and Tyr1356 each carry the phosphotyrosine; by autocatalysis modification. Position 1365 is a phosphotyrosine (Tyr1365).

This sequence belongs to the protein kinase superfamily. Tyr protein kinase family. As to quaternary structure, heterodimer made of an alpha chain (50 kDa) and a beta chain (145 kDa) which are disulfide linked. Binds PLXNB1. Interacts when phosphorylated with downstream effectors including STAT3, PIK3R1, SRC, PCLG1, GRB2 and GAB1. Interacts with SPSB1, SPSB2 and SPSB4. Interacts with INPP5D/SHIP1. When phosphorylated at Tyr-1356, interacts with INPPL1/SHIP2. Interacts with RANBP9 and RANBP10, as well as SPSB1, SPSB2, SPSB3 and SPSB4. SPSB1 binding occurs in the presence and in the absence of HGF, however HGF treatment has a positive effect on this interaction. Interacts with MUC20; prevents interaction with GRB2 and suppresses hepatocyte growth factor-induced cell proliferation. Interacts with GRB10. Interacts with PTPN1 and PTPN2. Interacts with HSP90AA1 and HSP90AB1; the interaction suppresses MET kinase activity. Interacts with tensin TNS3. Interacts (when phosphorylated) with tensin TNS4 (via SH2 domain); the interaction increases MET protein stability by inhibiting MET endocytosis and subsequent lysosomal degradation. Autophosphorylated in response to ligand binding on Tyr-1234 and Tyr-1235 in the kinase domain leading to further phosphorylation of Tyr-1349 and Tyr-1356 in the C-terminal multifunctional docking site. Dephosphorylated by PTPRJ at Tyr-1349 and Tyr-1365. Dephosphorylated by PTPN1 and PTPN2. Post-translationally, ubiquitinated. Ubiquitination by CBL regulates the receptor stability and activity through proteasomal degradation. In terms of processing, O-mannosylation of IPT/TIG domains by TMEM260 is required for protein maturation. O-mannosylated residues are composed of single mannose glycans that are not elongated or modified.

The protein resides in the membrane. It catalyses the reaction L-tyrosyl-[protein] + ATP = O-phospho-L-tyrosyl-[protein] + ADP + H(+). In its inactive state, the C-terminal tail interacts with the catalytic domain and inhibits the kinase activity. Upon ligand binding, the C-terminal tail is displaced and becomes phosphorylated, thus increasing the kinase activity. Its function is as follows. Receptor tyrosine kinase that transduces signals from the extracellular matrix into the cytoplasm by binding to hepatocyte growth factor/HGF ligand. Regulates many physiological processes including proliferation, scattering, morphogenesis and survival. Ligand binding at the cell surface induces autophosphorylation of MET on its intracellular domain that provides docking sites for downstream signaling molecules. Following activation by ligand, interacts with the PI3-kinase subunit PIK3R1, PLCG1, SRC, GRB2, STAT3 or the adapter GAB1. Recruitment of these downstream effectors by MET leads to the activation of several signaling cascades including the RAS-ERK, PI3 kinase-AKT, or PLCgamma-PKC. The RAS-ERK activation is associated with the morphogenetic effects while PI3K/AKT coordinates prosurvival effects. During embryonic development, MET signaling plays a role in gastrulation, development and migration of muscles and neuronal precursors, angiogenesis and kidney formation. In adults, participates in wound healing as well as organ regeneration and tissue remodeling. Also promotes differentiation and proliferation of hematopoietic cells. The sequence is that of Hepatocyte growth factor receptor (MET) from Plecturocebus moloch (Dusky titi monkey).